Here is a 964-residue protein sequence, read N- to C-terminus: Coatomer subunit beta (964 aa).

HEAT repeat units follow at residues 129-166, 238-275, 314-351, 393-430, and 466-506; these read ELLE…NFDW, AERS…APTA, KVMQ…SRNI, DVAA…KFPA, and SQIL…QQGS. Positions 490-501 are enriched in basic and acidic residues; it reads RRLAGDQTEEQK. The segment at 490-530 is disordered; the sequence is RRLAGDQTEEQKQQQGSAGGNAAGSAAEGSGSGNASNKVTS. Positions 512–526 are enriched in low complexity; it reads AGSAAEGSGSGNASN.

In terms of assembly, oligomeric complex that consists of at least the alpha, beta, beta', gamma, delta, epsilon and zeta subunits. In terms of tissue distribution, during oogenesis and spermatogenesis, expressed in ovariole, germarium, testis tip and testis.

It is found in the cytoplasm. The protein localises to the golgi apparatus membrane. Its subcellular location is the cytoplasmic vesicle. The protein resides in the COPI-coated vesicle membrane. The coatomer is a cytosolic protein complex that binds to dilysine motifs and reversibly associates with Golgi non-clathrin-coated vesicles, which further mediate biosynthetic protein transport from the ER, via the Golgi up to the trans Golgi network. Coatomer complex is required for budding from Golgi membranes, and is essential for the retrograde Golgi-to-ER transport of dilysine-tagged proteins. Required for limiting lipid storage in lipid droplets. This Drosophila melanogaster (Fruit fly) protein is Coatomer subunit beta.